A 458-amino-acid chain; its full sequence is UPF0210 protein Mevan_0738 (458 aa).

It belongs to the UPF0210 family.

In Methanococcus vannielii (strain ATCC 35089 / DSM 1224 / JCM 13029 / OCM 148 / SB), this protein is UPF0210 protein Mevan_0738.